The chain runs to 252 residues: 3-deoxy-manno-octulosonate cytidylyltransferase (252 aa).

This sequence belongs to the KdsB family.

The protein localises to the cytoplasm. The catalysed reaction is 3-deoxy-alpha-D-manno-oct-2-ulosonate + CTP = CMP-3-deoxy-beta-D-manno-octulosonate + diphosphate. The protein operates within nucleotide-sugar biosynthesis; CMP-3-deoxy-D-manno-octulosonate biosynthesis; CMP-3-deoxy-D-manno-octulosonate from 3-deoxy-D-manno-octulosonate and CTP: step 1/1. Its pathway is bacterial outer membrane biogenesis; lipopolysaccharide biosynthesis. Functionally, activates KDO (a required 8-carbon sugar) for incorporation into bacterial lipopolysaccharide in Gram-negative bacteria. The polypeptide is 3-deoxy-manno-octulosonate cytidylyltransferase (Nitratidesulfovibrio vulgaris (strain ATCC 29579 / DSM 644 / CCUG 34227 / NCIMB 8303 / VKM B-1760 / Hildenborough) (Desulfovibrio vulgaris)).